The primary structure comprises 304 residues: Homoserine kinase (304 aa).

An ATP-binding site is contributed by 90–100 (PLARGLGSSAS).

The protein belongs to the GHMP kinase family. Homoserine kinase subfamily.

It is found in the cytoplasm. The catalysed reaction is L-homoserine + ATP = O-phospho-L-homoserine + ADP + H(+). It functions in the pathway amino-acid biosynthesis; L-threonine biosynthesis; L-threonine from L-aspartate: step 4/5. In terms of biological role, catalyzes the ATP-dependent phosphorylation of L-homoserine to L-homoserine phosphate. The polypeptide is Homoserine kinase (Staphylococcus aureus (strain MSSA476)).